We begin with the raw amino-acid sequence, 539 residues long: MEGGAMMLLEVKNVTKKFGDKVVLKNISFTLEEGESLGILGKSGAGKSVLLHMLRGMDGYEPTEGQIIYHVSYCEKCGYVDVPSKAGTPCKKCGNELKKIEVDFWNDKKYTYNLKRKIAIMLQRTFALYGEKTVLENILEALHQAGYEGKEAIDMALKLIKMVKLEHRITHIARDLSGGEKQRVVLARQIAKEPFIFLADEPTGTLDPQTAKLVHSALKELVIKNKISLILTSHWPEVIAELTEKAIWLDKGEIIMEGTSEEVVNKFMETVKEFKKPETEVEIKEDIIKLENVSKHYCSVERGVIKAVDNVTLNIREREIFGLVGTSGAGKTTLAKIIAGVLPPSKGKYWFRVGDEWVDMTKPGPMGRGRAKRYIGILFQEYALYPHRTILENLTEAIGLELPDEFARMKAVYTLVSVGFSEEEAEEILDKYPHELSVGERHRCALAQVLIKEPRVVILDEPTGTMDPITRNTVAESIHKSRIELEQTYIIVSHDMDFVLNVCDRAGLMRNGKLIKVGKPEEIVALLTEEEKQEMFGQK.

ABC transporter domains follow at residues 9-276 (LEVK…EFKK) and 288-536 (IKLE…QEMF). Residues 41–48 (GKSGAGKS) and 325–332 (GTSGAGKT) contribute to the ATP site.

It belongs to the ABC transporter superfamily.

This is an uncharacterized protein from Methanocaldococcus jannaschii (strain ATCC 43067 / DSM 2661 / JAL-1 / JCM 10045 / NBRC 100440) (Methanococcus jannaschii).